We begin with the raw amino-acid sequence, 664 residues long: Cyclic nucleotide-gated channel alpha-2 (664 aa).

Polar residues predominate over residues 1-20 (MTEKSNGVKSSPANNHNNHV). Positions 1–49 (MTEKSNGVKSSPANNHNNHVPATIKANGKDESRTRSRPQSAADDDTSSE) are disordered. The Cytoplasmic portion of the chain corresponds to 1 to 144 (MTEKSNGVKS…PAGDWYYRWL (144 aa)). The helical transmembrane segment at 145 to 166 (FVIAMPVLYNWCLLVARACFSD) threads the bilayer. Residues 167–176 (LQRGYFLVWL) are Extracellular-facing. Residues 177–197 (VLDYFSDVVYIADLFIRLRTG) traverse the membrane as a helical segment. Over 198-222 (FLEQGLLVKDPKKLRDNYIHTLQFK) the chain is Cytoplasmic. The chain crosses the membrane as a helical span at residues 223 to 241 (LDVASIIPTDLIYFAVGIH). Residues 242–246 (NPELR) are Extracellular-facing. Residues 247–265 (FNRLLHFARMFEFFDRTET) form a helical membrane-spanning segment. Residues 266–272 (RTSYPNI) are Cytoplasmic-facing. The interval 270 to 378 (PNIFRISNLV…GNVGSMISNM (109 aa)) is ion conduction pathway. A helical transmembrane segment spans residues 273–296 (FRISNLVLYILVIIHWNACIYYAI). At 297–319 (SKSIGFGVDTWVYPNITDPEYGY) the chain is on the extracellular side. A run of 2 helical transmembrane segments spans residues 320-354 (LAREYIYCLYWSTLTLTTIGETPPPVKDEEYLFVI) and 355-379 (FDFLIGVLIFATIVGNVGSMISNMN). Residues 337–340 (TIGE) form a selectivity filter region. The segment at 380–456 (ATRAEFQAKI…STLKKVRIFQ (77 aa)) is C-linker. The Cytoplasmic portion of the chain corresponds to 380–664 (ATRAEFQAKI…SPEPAAAEQP (285 aa)). The cyclic nucleotide-binding domain stretch occupies residues 460–580 (AGLLVELVLK…EERGREILMK (121 aa)). 3',5'-cyclic GMP-binding residues include Gly520, Ser523, Arg536, and Thr537. Positions 536 and 537 each coordinate 3',5'-cyclic AMP. The stretch at 597–651 (VQEKLKQLETNMETLYTRFGRLLAEYTGAQQKLKQRITVLEVKMKQNTEDDYLSD) forms a coiled coil. The disordered stretch occupies residues 644–664 (TEDDYLSDGMNSPEPAAAEQP).

This sequence belongs to the cyclic nucleotide-gated cation channel (TC 1.A.1.5) family. CNGA2 subfamily. The olfactory cyclic nucleotide-gated channel is an heterotetramer composed of CNGA2, CNGA4 and CNGB1b subunits with 2:1:1 stoichiometry.

It localises to the cell projection. The protein localises to the cilium membrane. It catalyses the reaction Ca(2+)(in) = Ca(2+)(out). The enzyme catalyses Na(+)(in) = Na(+)(out). It carries out the reaction K(+)(in) = K(+)(out). The catalysed reaction is NH4(+)(in) = NH4(+)(out). It catalyses the reaction Rb(+)(in) = Rb(+)(out). The enzyme catalyses Li(+)(in) = Li(+)(out). It carries out the reaction Cs(+)(in) = Cs(+)(out). Functionally, pore-forming subunit of the olfactory cyclic nucleotide-gated channel. Operates in the cilia of olfactory sensory neurons where chemical stimulation of the odorant is converted to an electrical signal. Mediates odorant-induced cAMP-dependent Ca(2+) influx triggering neuron depolarization. The rise of intracellular Ca(2+) levels potentiates the olfactory response by activating Ca(2+)-dependent Cl(-) channels, but it also serves as a negative feedback signal to desensitize the channel for rapid adaptation to odorants. Conducts cAMP- and cGMP-gated ion currents, with permeability for monovalent and divalent cations. The polypeptide is Cyclic nucleotide-gated channel alpha-2 (Oryctolagus cuniculus (Rabbit)).